The sequence spans 933 residues: Valine--tRNA ligase (933 aa).

Positions 1–24 are disordered; it reads MIERVKTTKLSEASGLPKTYDPVG. Residues 57–67 carry the 'HIGH' region motif; that stretch reads PNVTGSLHMGH. The 'KMSKS' region motif lies at 557 to 561; sequence KMSKS. Lys-560 provides a ligand contact to ATP. Residues 866 to 932 are a coiled coil; the sequence is LIDIASLRSR…RLVKERLMGL (67 aa).

This sequence belongs to the class-I aminoacyl-tRNA synthetase family. ValS type 1 subfamily. As to quaternary structure, monomer.

Its subcellular location is the cytoplasm. The catalysed reaction is tRNA(Val) + L-valine + ATP = L-valyl-tRNA(Val) + AMP + diphosphate. Catalyzes the attachment of valine to tRNA(Val). As ValRS can inadvertently accommodate and process structurally similar amino acids such as threonine, to avoid such errors, it has a 'posttransfer' editing activity that hydrolyzes mischarged Thr-tRNA(Val) in a tRNA-dependent manner. In Prochlorococcus marinus (strain NATL2A), this protein is Valine--tRNA ligase.